The following is a 304-amino-acid chain: Histone H1.8 (304 aa).

Residues 1–24 (MAPGSVSSVSSSSFPSRDTSPSGS) show a composition bias toward low complexity. Disordered stretches follow at residues 1–38 (MAPGSVSSVSSSSFPSRDTSPSGSCGLPGADKPGPSCR), 110–248 (SKAK…NSVA), and 270–304 (TVQETKVPTPSQDIGHKVQPIPRVRKAKTPENTQA). An H15 domain is found at 45 to 123 (RNPTMLHMVL…GATGSFKLVP (79 aa)). The segment covering 132–144 (APKAGRGAAGAKE) has biased composition (low complexity). 3 stretches are compositionally biased toward basic and acidic residues: residues 153-166 (LKKDQVGKATMEKG), 189-202 (KPKEVRKAPLKQDK), and 225-237 (ANAHGKTKGEKSK). Residues 154-170 (KKDQVGKATMEKGQKRR) carry the Nuclear localization signal motif. Positions 270–281 (TVQETKVPTPSQ) are enriched in polar residues.

Belongs to the histone H1/H5 family. As to expression, oocyte-specific.

It is found in the cytoplasm. Its subcellular location is the nucleus. It localises to the chromosome. May play a key role in the control of gene expression during oogenesis and early embryogenesis, presumably through the perturbation of chromatin structure. Essential for meiotic maturation of germinal vesicle-stage oocytes. The somatic type linker histone H1c is rapidly replaced by H1oo in a donor nucleus transplanted into an oocyte. The greater mobility of H1oo as compared to H1c may contribute to this rapid replacement and increased instability of the embryonic chromatin structure. The rapid replacement of H1c with H1oo may play an important role in nuclear remodeling. This Mus musculus (Mouse) protein is Histone H1.8.